The chain runs to 310 residues: Ribosomal RNA small subunit methyltransferase H (310 aa).

S-adenosyl-L-methionine-binding positions include 35 to 37, aspartate 52, phenylalanine 79, aspartate 100, and glutamine 107; that span reads GGH.

The protein belongs to the methyltransferase superfamily. RsmH family.

Its subcellular location is the cytoplasm. It carries out the reaction cytidine(1402) in 16S rRNA + S-adenosyl-L-methionine = N(4)-methylcytidine(1402) in 16S rRNA + S-adenosyl-L-homocysteine + H(+). Specifically methylates the N4 position of cytidine in position 1402 (C1402) of 16S rRNA. This chain is Ribosomal RNA small subunit methyltransferase H, found in Anaeromyxobacter dehalogenans (strain 2CP-1 / ATCC BAA-258).